We begin with the raw amino-acid sequence, 468 residues long: tRNA threonylcarbamoyladenosine dehydratase (468 aa).

3 helical membrane passes run 15-35 (FWIAVSSSVTTACVILGTLEF), 109-129 (NSFVIVVGCGGVGSWVINMLA), and 315-335 (ILPVIGPMPGIFGLTIATYVL).

It belongs to the HesA/MoeB/ThiF family.

It localises to the mitochondrion outer membrane. Catalyzes the ATP-dependent dehydration of threonylcarbamoyladenosine at position 37 (t(6)A37) to form cyclic t(6)A37 (ct(6)A37) in tRNAs that read codons beginning with adenine. This chain is tRNA threonylcarbamoyladenosine dehydratase (tcd1), found in Schizosaccharomyces pombe (strain 972 / ATCC 24843) (Fission yeast).